A 225-amino-acid chain; its full sequence is 2-phytyl-1,4-naphtoquinone methyltransferase (225 aa).

Belongs to the class I-like SAM-binding methyltransferase superfamily. MenG/UbiE family.

It carries out the reaction demethylphylloquinol + S-adenosyl-L-methionine = phylloquinol + S-adenosyl-L-homocysteine + H(+). It participates in cofactor biosynthesis; phylloquinone biosynthesis. Methyltransferase required for the conversion of 2-phytyl-1,4-beta-naphthoquinol to phylloquinol. This Thermosynechococcus vestitus (strain NIES-2133 / IAM M-273 / BP-1) protein is 2-phytyl-1,4-naphtoquinone methyltransferase.